Consider the following 143-residue polypeptide: S-protein homolog 11 (143 aa).

Residues 1–20 (MNCFSFSFIIIVLCAGSSNA) form the signal peptide.

This sequence belongs to the plant self-incompatibility (S1) protein family.

It is found in the secreted. The sequence is that of S-protein homolog 11 from Arabidopsis thaliana (Mouse-ear cress).